We begin with the raw amino-acid sequence, 478 residues long: Pathogenicity cluster 5 protein d (478 aa).

The N-terminal stretch at 1–19 (MQIQNLIAALAGMAVVAEA) is a signal peptide. Disordered stretches follow at residues 35–89 (RQNK…GQAN) and 299–400 (NGGK…GGKG). Positions 38–64 (KGGNNNNNNNNNNNNNNNNNKNNGGNN) are enriched in low complexity. Positions 65 to 89 (QLCLNPNNVQKGSQQAGTPKQGQAN) are enriched in polar residues. A compositionally biased stretch (gly residues) spans 316-326 (NNDGGGGGNDG). Composition is skewed to low complexity over residues 327–348 (GNNS…QNGA) and 379–393 (TQAG…TNGN). 2 N-linked (GlcNAc...) asparagine glycosylation sites follow: Asn328 and Asn332.

Its subcellular location is the secreted. Secreted protein required for appressorial penetration of intact host epidermal cells and for pathogenicit, but not for subsequent biotrophic and necrotrophic colonization of leaves. This Colletotrichum graminicola (strain M1.001 / M2 / FGSC 10212) (Maize anthracnose fungus) protein is Pathogenicity cluster 5 protein d.